Consider the following 638-residue polypeptide: 1-deoxy-D-xylulose-5-phosphate synthase (638 aa).

Thiamine diphosphate contacts are provided by residues His-78 and Ala-119–Ser-121. Asp-150 is a Mg(2+) binding site. Thiamine diphosphate-binding positions include Gly-151 to Ser-152, Asn-179, Tyr-288, and Glu-370. Asn-179 is a Mg(2+) binding site.

Belongs to the transketolase family. DXPS subfamily. Homodimer. Mg(2+) is required as a cofactor. Requires thiamine diphosphate as cofactor.

It carries out the reaction D-glyceraldehyde 3-phosphate + pyruvate + H(+) = 1-deoxy-D-xylulose 5-phosphate + CO2. Its pathway is metabolic intermediate biosynthesis; 1-deoxy-D-xylulose 5-phosphate biosynthesis; 1-deoxy-D-xylulose 5-phosphate from D-glyceraldehyde 3-phosphate and pyruvate: step 1/1. Catalyzes the acyloin condensation reaction between C atoms 2 and 3 of pyruvate and glyceraldehyde 3-phosphate to yield 1-deoxy-D-xylulose-5-phosphate (DXP). The polypeptide is 1-deoxy-D-xylulose-5-phosphate synthase (Brucella anthropi (strain ATCC 49188 / DSM 6882 / CCUG 24695 / JCM 21032 / LMG 3331 / NBRC 15819 / NCTC 12168 / Alc 37) (Ochrobactrum anthropi)).